Consider the following 152-residue polypeptide: Nucleoside diphosphate kinase B (152 aa).

The segment at 1-66 (MANLERTFIA…DRPFFPGLVK (66 aa)) is interaction with AKAP13. Positions 12, 60, 88, 94, 105, and 115 each coordinate ATP. The Pros-phosphohistidine intermediate role is filled by His-118.

The protein belongs to the NDK family. In terms of assembly, hexamer of two different chains: An and B (A6, A5B, A4B2, A3B3, A2B4, AB5, B6). Interacts with CAPN8. Interacts with AKAP13. Interacts with ITGB1BP1 (via C-terminal domain region). Interacts with BCL2L10. Mg(2+) serves as cofactor. In terms of tissue distribution, ubiquitously expressed.

It localises to the cytoplasm. Its subcellular location is the cell projection. The protein resides in the lamellipodium. The protein localises to the ruffle. It is found in the perinuclear region. It localises to the nucleus. The enzyme catalyses a 2'-deoxyribonucleoside 5'-diphosphate + ATP = a 2'-deoxyribonucleoside 5'-triphosphate + ADP. It carries out the reaction a ribonucleoside 5'-diphosphate + ATP = a ribonucleoside 5'-triphosphate + ADP. It catalyses the reaction ATP + protein L-histidine = ADP + protein N-phospho-L-histidine.. In terms of biological role, major role in the synthesis of nucleoside triphosphates other than ATP. The ATP gamma phosphate is transferred to the NDP beta phosphate via a ping-pong mechanism, using a phosphorylated active-site intermediate. Negatively regulates Rho activity by interacting with AKAP13/LBC. Acts as a transcriptional activator of the MYC gene; binds DNA non-specifically. Binds to both single-stranded guanine- and cytosine-rich strands within the nuclease hypersensitive element (NHE) III(1) region of the MYC gene promoter. Does not bind to duplex NHE III(1). Has G-quadruplex (G4) DNA-binding activity, which is independent of its nucleotide-binding and kinase activity. Binds both folded and unfolded G4 with similar low nanomolar affinities. Stabilizes folded G4s regardless of whether they are prefolded or not. Exhibits histidine protein kinase activity. The polypeptide is Nucleoside diphosphate kinase B (NME2) (Homo sapiens (Human)).